A 373-amino-acid polypeptide reads, in one-letter code: Muconate cycloisomerase 1 (373 aa).

Lys169 is an active-site residue. Lys169 functions as the Proton acceptor in the catalytic mechanism. Positions 198, 224, and 249 each coordinate Mn(2+). Glu327 functions as the Proton donor in the catalytic mechanism.

Belongs to the mandelate racemase/muconate lactonizing enzyme family. The cofactor is Mn(2+).

The catalysed reaction is (S)-muconolactone = cis,cis-muconate + H(+). The sequence is that of Muconate cycloisomerase 1 (catB) from Rhodococcus opacus (Nocardia opaca).